Reading from the N-terminus, the 125-residue chain is Apoptosis inhibitor Rv3655c (125 aa).

The signal sequence occupies residues 1 to 33; the sequence is MEAALAIATLVLVLVLCLAGVTAVSMQVRCIDA.

Interacts with human E3 ubiquitin-protein ligase RNF213.

Its subcellular location is the secreted. The protein localises to the host cytoplasm. Functionally, effector protein that participates in the suppression of macrophage apoptosis by blocking the extrinsic pathway. Interferes with caspase-8 activation and binds to the host E3 ubiquitin-protein ligase RNF213, whose fusion partners have anti-apoptotic function. This is Apoptosis inhibitor Rv3655c from Mycobacterium tuberculosis (strain ATCC 25618 / H37Rv).